Reading from the N-terminus, the 140-residue chain is Large ribosomal subunit protein uL11 (140 aa).

The protein belongs to the universal ribosomal protein uL11 family. In terms of assembly, part of the ribosomal stalk of the 50S ribosomal subunit. Interacts with L10 and the large rRNA to form the base of the stalk. L10 forms an elongated spine to which L12 dimers bind in a sequential fashion forming a multimeric L10(L12)X complex. In terms of processing, one or more lysine residues are methylated.

In terms of biological role, forms part of the ribosomal stalk which helps the ribosome interact with GTP-bound translation factors. The chain is Large ribosomal subunit protein uL11 from Gemmatimonas aurantiaca (strain DSM 14586 / JCM 11422 / NBRC 100505 / T-27).